A 436-amino-acid polypeptide reads, in one-letter code: 23S rRNA (uracil(1939)-C(5))-methyltransferase RlmD (436 aa).

A TRAM domain is found at 10 to 68; it reads KQKTTQKIVAEIQDLDYQGLGVAKIQGKTWFIENALPTEKVEAVVTDEKRQYGLATAQK. Residues Cys-81, Cys-87, Cys-90, and Cys-168 each coordinate [4Fe-4S] cluster. 6 residues coordinate S-adenosyl-L-methionine: Gln-270, Phe-299, Asn-304, Glu-320, Asp-347, and Asp-368. Cys-394 acts as the Nucleophile in catalysis.

Belongs to the class I-like SAM-binding methyltransferase superfamily. RNA M5U methyltransferase family. RlmD subfamily.

It catalyses the reaction uridine(1939) in 23S rRNA + S-adenosyl-L-methionine = 5-methyluridine(1939) in 23S rRNA + S-adenosyl-L-homocysteine + H(+). Functionally, catalyzes the formation of 5-methyl-uridine at position 1939 (m5U1939) in 23S rRNA. The polypeptide is 23S rRNA (uracil(1939)-C(5))-methyltransferase RlmD (Haemophilus parainfluenzae (strain T3T1)).